Consider the following 339-residue polypeptide: MRVAVDGMGGDHSPSAVVEGCVQALEEFKDIEIYITGPEDLLKEAFSKFKYDKERVVFIDAKEVISTNEHPAMAVKKKKDSSLVKALRLVKDNQCEAVISAGSTGAFLTGCTLIVGRIKGVERPALAPVMPGKNGPFMIIDAGANVDSKPSYLVQFAKMGEVYFKSVMDVNNPKVGLVNIGEEEEKGNDLTKATYKLLKEEKDINFIGNVEPREVSTGDVDVLVCDGFVGNTVLKMYEGVASTILSMIKSEVKSSFLAKLGVPFLAPALMNLKKKMDYKEYGGAPFLGVKGICVKAHGSSDAKAFKNAIRQARKFHENDLIGKLSEEITKKSFDNQKNI.

It belongs to the PlsX family. As to quaternary structure, homodimer. Probably interacts with PlsY.

The protein resides in the cytoplasm. It catalyses the reaction a fatty acyl-[ACP] + phosphate = an acyl phosphate + holo-[ACP]. Its pathway is lipid metabolism; phospholipid metabolism. Its function is as follows. Catalyzes the reversible formation of acyl-phosphate (acyl-PO(4)) from acyl-[acyl-carrier-protein] (acyl-ACP). This enzyme utilizes acyl-ACP as fatty acyl donor, but not acyl-CoA. The chain is Phosphate acyltransferase from Clostridium perfringens (strain ATCC 13124 / DSM 756 / JCM 1290 / NCIMB 6125 / NCTC 8237 / Type A).